The chain runs to 321 residues: tRNA dimethylallyltransferase (321 aa).

25–32 (GPTASGKS) lines the ATP pocket. Substrate is bound at residue 27–32 (TASGKS). The interval 50-53 (DSMQ) is interaction with substrate tRNA.

This sequence belongs to the IPP transferase family. As to quaternary structure, monomer. Mg(2+) is required as a cofactor.

It catalyses the reaction adenosine(37) in tRNA + dimethylallyl diphosphate = N(6)-dimethylallyladenosine(37) in tRNA + diphosphate. Its function is as follows. Catalyzes the transfer of a dimethylallyl group onto the adenine at position 37 in tRNAs that read codons beginning with uridine, leading to the formation of N6-(dimethylallyl)adenosine (i(6)A). The protein is tRNA dimethylallyltransferase of Rhodopseudomonas palustris (strain ATCC BAA-98 / CGA009).